Consider the following 877-residue polypeptide: MDKLSSKIRAEFLGFFKNSGCAVVPSDSLIPAGDKTLLFTSAGMVQFKQHFLGQSKDSFTRATSCQKCFRTSDIDQVGTTARHLTFFEMLGNFSFGDYFKKEAAAWAWEFLTKNMSLPKDKLYITIYKDDDEVAGIWKNIAPANKIIKMDEKTNFWNMGETGPCGPCSEILIDLGQETGCGSPACCPECNCDRYLEIWNLVFTQFDKQPDGSLKNLPRKNIDTGMGLERLSATVNGRKNVFDTDLFMPVMENAAEILKIKNEGSNISKLRMIADHSRAITFLISDGILPSNEGRGYVLRRILRRALRQGKFYGYNKPYINELVSDVLKIMEGAYPELSSKLSNIRSIVKTEEEKFLETLESGSEILSSLINSYKSKDINIISGKDVFKLYDTYGFPHDLTKEMAFENGLEIDEDKFKFEQKKAQEKSRVAWCGSGERDITFYSILRKKTGDTVFTGYDNYASESRVLALIKDGSEISELKTGDNGEIILSHSSFYAQSGGQSDDKGKIANNSFESIVEYIFKPAGNLFVHKVKVLKGLIKINDAVSTIIDIERRKQIARHHTAAHLLHKALREAFGGHITQAGSLVARDYFRFDFTHFSALKKDDLIKIEKRVNSIIRLNSEVCIETMAIAKARNAGAMALFGEKYGDEVRTVLIKNESGDGNYSMELCGGTHVSRTGDIGIFKIISESSAAAGVRRIEAVAGIAAENYILDEEAVIIKTSKILNASKEELVNKAHKYTSDYKKLENEFKSLKSSLISGEIDSYAKEVKKINGINFLSVIADKADIKALRTISDQLKEKLKSAVLLIVSKNEDRASFILSATADCVQKGINAGKIAKAFAASINGSAGGKPDFAQGGSKDLSNLNDAVKNAHKYILL.

Residues histidine 561, histidine 565, cysteine 669, and histidine 673 each coordinate Zn(2+).

This sequence belongs to the class-II aminoacyl-tRNA synthetase family. It depends on Zn(2+) as a cofactor.

Its subcellular location is the cytoplasm. The enzyme catalyses tRNA(Ala) + L-alanine + ATP = L-alanyl-tRNA(Ala) + AMP + diphosphate. Catalyzes the attachment of alanine to tRNA(Ala) in a two-step reaction: alanine is first activated by ATP to form Ala-AMP and then transferred to the acceptor end of tRNA(Ala). Also edits incorrectly charged Ser-tRNA(Ala) and Gly-tRNA(Ala) via its editing domain. The chain is Alanine--tRNA ligase from Endomicrobium trichonymphae.